The chain runs to 156 residues: Probable cyclic pyranopterin monophosphate synthase (156 aa).

Substrate is bound by residues 74-76 (LCH) and 110-111 (ME). D125 is an active-site residue.

This sequence belongs to the MoaC family. Homohexamer; trimer of dimers.

The catalysed reaction is (8S)-3',8-cyclo-7,8-dihydroguanosine 5'-triphosphate = cyclic pyranopterin phosphate + diphosphate. It functions in the pathway cofactor biosynthesis; molybdopterin biosynthesis. Functionally, catalyzes the conversion of (8S)-3',8-cyclo-7,8-dihydroguanosine 5'-triphosphate to cyclic pyranopterin monophosphate (cPMP). This is Probable cyclic pyranopterin monophosphate synthase from Thermococcus onnurineus (strain NA1).